A 163-amino-acid polypeptide reads, in one-letter code: uncharacterized protein (163 aa).

Over residues Met-1–Arg-10 the composition is skewed to basic and acidic residues. The interval Met-1 to Ser-163 is disordered.

This is an uncharacterized protein from Homo sapiens (Human).